A 171-amino-acid chain; its full sequence is Co-chaperone protein HscB homolog (171 aa).

The J domain maps to 2 to 74; the sequence is NHFELFGLPS…ISRAEYILAE (73 aa).

It belongs to the HscB family. Interacts with HscA and stimulates its ATPase activity.

Its function is as follows. Co-chaperone involved in the maturation of iron-sulfur cluster-containing proteins. Seems to help targeting proteins to be folded toward HscA. This chain is Co-chaperone protein HscB homolog, found in Vibrio campbellii (strain ATCC BAA-1116).